Consider the following 422-residue polypeptide: Zinc finger protein Gfi-1 (422 aa).

Positions 1-20 are SNAG domain; it reads MPRSFLVKSKKAHSYHQPRS. The disordered stretch occupies residues 1-109; it reads MPRSFLVKSK…ASEKSMCPSL (109 aa). 2 positions are modified to phosphoserine: Ser20 and Ser56. The tract at residues 140-257 is required for interaction with RELA; sequence RPCGALERGA…LLLGGGSYKC (118 aa). 6 consecutive C2H2-type zinc fingers follow at residues 255–278, 284–306, 312–334, 340–362, 368–390, and 396–419; these read YKCI…RRSH, FACE…KAVH, FDCK…LLIH, YPCQ…TFIH, HKCQ…SRKH, and FGCD…ETQH.

Interacts with U2AF1L4. Component of RCOR-GFI-KDM1A-HDAC complexes. Interacts directly with RCOR1, KDM1A and HDAC2. Also interacts with HDAC1. Interacts (via the zinc-finger domain) with ARIH2; the interaction prevents GFI1 ubiquitination and proteasomal degradation. Interacts with PIAS3; the interaction relieves the inhibitory effect of PIAS3 on STAT3-mediated transcriptional activity. Forms a complex with EHMT2 and HDAC1 to promote 'Lys-9' dimethylation of H3 (H3K9Me2) and repress expression of target genes. Interacts directly with EHMT2. Component of the GFI1-AJUBA-HDAC1 repressor complex. Interacts directly with AJUBA (via ITS LIM domains); the interaction results in the HDAC-dependent corepression of a subset of GFI1 target genes and, occurs independently of the SNAG domain. Interacts with SPI1; the interaction inhibits SPI1 transcriptional activity targeted at macrophage-specific genes, repressing macrophage differentiation of myeloid progenitor cells and promoting granulocyte commitment. Interacts with RUNX1T1; the interaction represses HDAC-mediated transcriptional activity. Interacts with RELA; the interaction occurs on liposaccharide (LPS) stimulation and controls RELA DNA binding activity and regulates endotoxin-mediated TOLL-like receptor inflammatory response. Interacts (via the C-terminal zinc fingers) with ZBTB17; the interaction results in the recruitment of GFI1 to the CDKN1A/p21 and CDKN1B promoters and repression of transcription. Ubiquitinated. Ubiquitination and degradation by the proteasome is inhibited by the ubiquitin ligase, ARIH2.

It is found in the nucleus. Its function is as follows. Transcription repressor essential for hematopoiesis. Functions in a cell-context and development-specific manner. Binds to 5'-TAAATCAC[AT]GCA-3' in the promoter region of a large number of genes. Component of several complexes, including the EHMT2-GFI1-HDAC1, AJUBA-GFI1-HDAC1 and RCOR-GFI-KDM1A-HDAC complexes, that suppress, via histone deacetylase (HDAC) recruitment, a number of genes implicated in multilineage blood cell development. Regulates neutrophil differentiation, promotes proliferation of lymphoid cells, and is required for granulocyte development. Inhibits SPI1 transcriptional activity at macrophage-specific genes, repressing macrophage differentiation of myeloid progenitor cells and promoting granulocyte commitment. Mediates, together with U2AF1L4, the alternative splicing of CD45 and controls T-cell receptor signaling. Regulates the endotoxin-mediated Toll-like receptor (TLR) inflammatory response by antagonizing RELA. Cooperates with CBFA2T2 to regulate ITGB1-dependent neurite growth. Controls cell-cycle progression by repressing CDKNIA/p21 transcription in response to TGFB1 via recruitment of GFI1 by ZBTB17 to the CDKNIA/p21 and CDKNIB promoters. Required for the maintenance of inner ear hair cells. In addition to its role in transcription, acts as a substrate adapter for PRMT1 in the DNA damage response: facilitates the recognition of TP53BP1 and MRE11 substrates by PRMT1, promoting their methylation and the DNA damage response. The protein is Zinc finger protein Gfi-1 (GFI1) of Homo sapiens (Human).